Reading from the N-terminus, the 436-residue chain is MSVPNSPEAPWAVGQLNDQVKNWIQRLGFIWVEGQVTQVNMKSTWRFSYITLRDVNLEASVSLTVETSALKNLATPVKDGDRIVVHGKPSFYSKRGSFSLWVTEIRQVGIGQLLAQIEQLKKAMFAEGLFDPRLKTPLPFLPTTVGLITGRGSAAERDVMEVAKRRWPAVRFRVINTAVQGPKTVPQVVDALQELERDSAVDVIIVARGGGSVEDLLPFSEETLVREVSRLRTPVVSAIGHEPDNPLLDYVADVRAATPTDAAKTVVPDVVQELRIISEARQRGAGALRNWVAHERKGLAQIRTRPVMADPSLPVARQQDIIAEALQRKDRALGVHVRSLRSSIESLKAQVNALGPSQTLARGYSIVQVIPRDKSGAQVVTTVDQVTPGSQLRIRVPDGSITAAAMGVQAAPGGVMNKNSNTTDSTDNTENGTGEA.

The disordered stretch occupies residues 412 to 436; it reads PGGVMNKNSNTTDSTDNTENGTGEA. Residues 417-436 show a composition bias toward low complexity; sequence NKNSNTTDSTDNTENGTGEA.

This sequence belongs to the XseA family. Heterooligomer composed of large and small subunits.

The protein resides in the cytoplasm. It catalyses the reaction Exonucleolytic cleavage in either 5'- to 3'- or 3'- to 5'-direction to yield nucleoside 5'-phosphates.. Its function is as follows. Bidirectionally degrades single-stranded DNA into large acid-insoluble oligonucleotides, which are then degraded further into small acid-soluble oligonucleotides. The polypeptide is Exodeoxyribonuclease 7 large subunit (Corynebacterium jeikeium (strain K411)).